The following is a 248-amino-acid chain: ATP synthase subunit a, chloroplastic (248 aa).

5 consecutive transmembrane segments (helical) span residues Q39–V59, V96–F116, I135–T155, L200–L220, and G221–G241.

The protein belongs to the ATPase A chain family. In terms of assembly, F-type ATPases have 2 components, CF(1) - the catalytic core - and CF(0) - the membrane proton channel. CF(1) has five subunits: alpha(3), beta(3), gamma(1), delta(1), epsilon(1). CF(0) has four main subunits: a, b, b' and c.

Its subcellular location is the plastid. The protein localises to the chloroplast thylakoid membrane. Functionally, key component of the proton channel; it plays a direct role in the translocation of protons across the membrane. In Pelargonium hortorum (Common geranium), this protein is ATP synthase subunit a, chloroplastic.